A 280-amino-acid polypeptide reads, in one-letter code: Hydroxyacylglutathione hydrolase, mitochondrial (280 aa).

An N6-acetyllysine modification is found at Lys61. Zn(2+)-binding residues include His74, His76, Asp78, and His79. Residue Lys88 is modified to N6-acetyllysine. The Zn(2+) site is built by His130 and Asp154. Residues 163–165 (KFY) and 193–195 (HEY) each bind substrate. A Zn(2+)-binding site is contributed by His193. Lys201 is modified (N6-acetyllysine; alternate). Position 201 is an N6-succinyllysine; alternate (Lys201). Position 269–272 (269–272 (RREK)) interacts with substrate.

The protein belongs to the metallo-beta-lactamase superfamily. Glyoxalase II family. Monomer. Zn(2+) serves as cofactor. Testis.

Its subcellular location is the mitochondrion matrix. The protein localises to the cytoplasm. It catalyses the reaction an S-(2-hydroxyacyl)glutathione + H2O = a 2-hydroxy carboxylate + glutathione + H(+). It carries out the reaction (R)-S-lactoylglutathione + H2O = (R)-lactate + glutathione + H(+). It participates in secondary metabolite metabolism; methylglyoxal degradation; (R)-lactate from methylglyoxal: step 2/2. In terms of biological role, thiolesterase that catalyzes the hydrolysis of S-D-lactoyl-glutathione to form glutathione and D-lactic acid. In Callithrix jacchus (White-tufted-ear marmoset), this protein is Hydroxyacylglutathione hydrolase, mitochondrial (HAGH).